Reading from the N-terminus, the 799-residue chain is Ribosome biogenesis protein BOP1 homolog (799 aa).

Residues 1–171 (MPRRVRAQKR…DDTSDEEHSL (171 aa)) form a disordered region. Positions 58-69 (SESDVTDDEQID) are enriched in acidic residues. Basic and acidic residues predominate over residues 70–81 (EEARQADRDLLK). Positions 93 to 121 (DPSDADNDDDDDEEEAASDDDDEEEDAEP) are enriched in acidic residues. The segment covering 122 to 132 (SSDSSNEASDA) has biased composition (low complexity). WD repeat units follow at residues 457–498 (GHKA…RVVT), 500–538 (DAEV…AAID), 584–626 (PHHA…TQHP), 629–669 (KRNR…KKLL), 670–709 (TGVR…KPYK), 713–752 (YHKY…DLGQ), and 769–799 (SDGM…KLHV).

This sequence belongs to the WD repeat BOP1/ERB1 family.

It is found in the nucleus. Its subcellular location is the nucleolus. The protein resides in the nucleoplasm. Required for maturation of ribosomal RNAs and formation of the large ribosomal subunit. The chain is Ribosome biogenesis protein BOP1 homolog from Monosiga brevicollis (Choanoflagellate).